Consider the following 443-residue polypeptide: Tol-Pal system protein TolB (443 aa).

The N-terminal stretch at 1-18 is a signal peptide; sequence MRNIVYFILTLFSLTSYA.

This sequence belongs to the TolB family. The Tol-Pal system is composed of five core proteins: the inner membrane proteins TolA, TolQ and TolR, the periplasmic protein TolB and the outer membrane protein Pal. They form a network linking the inner and outer membranes and the peptidoglycan layer.

The protein resides in the periplasm. In terms of biological role, part of the Tol-Pal system, which plays a role in outer membrane invagination during cell division and is important for maintaining outer membrane integrity. This Rickettsia prowazekii (strain Madrid E) protein is Tol-Pal system protein TolB.